Here is an 898-residue protein sequence, read N- to C-terminus: Alanine--tRNA ligase (898 aa).

4 residues coordinate Zn(2+): His-584, His-588, Cys-686, and His-690.

It belongs to the class-II aminoacyl-tRNA synthetase family. The cofactor is Zn(2+).

It localises to the cytoplasm. The enzyme catalyses tRNA(Ala) + L-alanine + ATP = L-alanyl-tRNA(Ala) + AMP + diphosphate. In terms of biological role, catalyzes the attachment of alanine to tRNA(Ala) in a two-step reaction: alanine is first activated by ATP to form Ala-AMP and then transferred to the acceptor end of tRNA(Ala). Also edits incorrectly charged Ser-tRNA(Ala) and Gly-tRNA(Ala) via its editing domain. This is Alanine--tRNA ligase from Myxococcus xanthus (strain DK1622).